The sequence spans 83 residues: Kappa-theraphotoxin-Cg2a (83 aa).

The N-terminal stretch at 1-21 is a signal peptide; the sequence is MKGSAFAIILGLVVLCACSFA. Residues 22-53 constitute a propeptide that is removed on maturation; sequence EDEQDQFASPNELLRSMFLESRHELIPEVEGR. Disulfide bonds link Cys-55-Cys-69, Cys-62-Cys-74, and Cys-68-Cys-78. Leu-82 carries the post-translational modification Leucine amide.

This sequence belongs to the neurotoxin 30 (phrixotoxin) family. As to expression, expressed by the venom gland.

The protein resides in the secreted. In terms of biological role, inhibits voltage-gated potassium channels of the subtype Kv4.1/KCND1 with high affinity and shows weak effects on Kv4.2/KCND2 and Kv2.1/KCNB1 subtypes. The toxin modifies the gating behavior of the channel and may interact with the S3-S4 extracellular loop. The polypeptide is Kappa-theraphotoxin-Cg2a (Chilobrachys guangxiensis (Chinese earth tiger tarantula)).